The following is a 690-amino-acid chain: uncharacterized protein (690 aa).

To M.genitalium MG366 and M.pneumoniae MPN544.

This is an uncharacterized protein from Ureaplasma parvum serovar 3 (strain ATCC 700970).